Consider the following 334-residue polypeptide: L-lactate dehydrogenase B chain (334 aa).

NAD(+) is bound by residues 30–58 (GQVGMACAVSILLRDLCDELALVDVMEDR) and Arg100. Substrate contacts are provided by Arg107, Asn139, and Arg170. Residue Asn139 coordinates NAD(+). The active-site Proton acceptor is the His194. A substrate-binding site is contributed by Thr249.

It belongs to the LDH/MDH superfamily. LDH family. As to quaternary structure, homotetramer.

Its subcellular location is the cytoplasm. The enzyme catalyses (S)-lactate + NAD(+) = pyruvate + NADH + H(+). It functions in the pathway fermentation; pyruvate fermentation to lactate; (S)-lactate from pyruvate: step 1/1. Interconverts simultaneously and stereospecifically pyruvate and lactate with concomitant interconversion of NADH and NAD(+). The sequence is that of L-lactate dehydrogenase B chain (ldhb) from Fundulus heteroclitus (Killifish).